The chain runs to 150 residues: 3-hydroxyacyl-[acyl-carrier-protein] dehydratase FabZ (150 aa).

Histidine 57 is an active-site residue.

This sequence belongs to the thioester dehydratase family. FabZ subfamily.

It localises to the cytoplasm. The enzyme catalyses a (3R)-hydroxyacyl-[ACP] = a (2E)-enoyl-[ACP] + H2O. Functionally, involved in unsaturated fatty acids biosynthesis. Catalyzes the dehydration of short chain beta-hydroxyacyl-ACPs and long chain saturated and unsaturated beta-hydroxyacyl-ACPs. This Mannheimia succiniciproducens (strain KCTC 0769BP / MBEL55E) protein is 3-hydroxyacyl-[acyl-carrier-protein] dehydratase FabZ.